The sequence spans 502 residues: UPF0371 protein CLH_2534 (502 aa).

This sequence belongs to the UPF0371 family.

In Clostridium botulinum (strain Alaska E43 / Type E3), this protein is UPF0371 protein CLH_2534.